Here is a 224-residue protein sequence, read N- to C-terminus: Small ribosomal subunit protein uS5 (224 aa).

The tract at residues 1 to 38 is disordered; sequence MAEQSAGGQGAPEGRDSRDSREGRGRRDGGRGGRDSDK. Over residues 13-38 the composition is skewed to basic and acidic residues; it reads EGRDSRDSREGRGRRDGGRGGRDSDK. One can recognise an S5 DRBM domain in the interval 41–104; it reads YLERVVAINR…EEARKGFFRV (64 aa).

Belongs to the universal ribosomal protein uS5 family. Part of the 30S ribosomal subunit. Contacts proteins S4 and S8.

With S4 and S12 plays an important role in translational accuracy. In terms of biological role, located at the back of the 30S subunit body where it stabilizes the conformation of the head with respect to the body. In Mycobacterium ulcerans (strain Agy99), this protein is Small ribosomal subunit protein uS5.